The chain runs to 699 residues: Zinc finger protein 782 (699 aa).

Residues 8 to 79 (VSFQDVTVEF…EKEKGFLSRN (72 aa)) enclose the KRAB domain. The disordered stretch occupies residues 75–95 (FLSRNSPEDSQPDEISEKSPE). Residues 279–307 (CFCRITHKTLTGGKSFSQKSHIREHHRVH) form a C2H2-type 1; degenerate zinc finger. The C2H2-type 2; degenerate zinc-finger motif lies at 316 to 332 (GKSFNRNSTLPVHQRTH). The C2H2-type 3; degenerate zinc finger occupies 337 to 360 (YSDYHPCTETFSYQSTFSVHQKVH). The C2H2-type 4; degenerate zinc finger occupies 366-388 (YEYNECGKSCSMNSHLIWPQKSH). C2H2-type zinc fingers lie at residues 394–416 (YECP…QRTH), 422–444 (YKCD…QRTH), 450–472 (FECH…QRTH), 478–500 (FECN…RRTH), 506–528 (YKCD…HRTH), 534–556 (YKCN…HRIH), 562–584 (YKCN…HRTH), 590–612 (YQCE…QRTH), 618–640 (YECN…QRTH), 646–668 (YNCN…QRTH), and 674–696 (YKCD…QKAH).

The protein belongs to the krueppel C2H2-type zinc-finger protein family.

The protein resides in the nucleus. Functionally, may be involved in transcriptional regulation. This chain is Zinc finger protein 782 (ZNF782), found in Homo sapiens (Human).